The following is a 217-amino-acid chain: Small ribosomal subunit protein uS3 (217 aa).

The region spanning 40–110 is the KH type-2 domain; that stretch reads IRDLINKGFN…EVYINIHEVR (71 aa).

Belongs to the universal ribosomal protein uS3 family. In terms of assembly, part of the 30S ribosomal subunit. Forms a tight complex with proteins S10 and S14.

Binds the lower part of the 30S subunit head. Binds mRNA in the 70S ribosome, positioning it for translation. The chain is Small ribosomal subunit protein uS3 from Rickettsia felis (strain ATCC VR-1525 / URRWXCal2) (Rickettsia azadi).